Consider the following 3938-residue polypeptide: Protein bassoon (3938 aa).

A disordered region spans residues M1–I158. G2 is lipidated: N-myristoyl glycine. Over residues G9 to A29 the composition is skewed to gly residues. A compositionally biased stretch (low complexity) spans K31–V61. Residues P62–P70 form a 4 X 2 AA tandem repeats of P-G region. Composition is skewed to polar residues over residues Q86–A98 and Q127–S154. S142 carries the phosphoserine modification. R145 is subject to Omega-N-methylarginine. 2 consecutive C4-type zinc fingers follow at residues C167–C190 and C195–C217. 2 disordered regions span residues T228–K346 and L361–P456. Residues A230–H240 show a composition bias toward polar residues. Phosphoserine occurs at positions 241 and 245. Polar residues predominate over residues L361–P376. The span at P394–T406 shows a compositional bias: pro residues. 2 consecutive C4-type zinc fingers follow at residues C462–C485 and C490–C512. Disordered stretches follow at residues G523–G921, G934–G1247, M1294–S1541, and R1561–S1611. Pro residues predominate over residues A526–G539. Low complexity predominate over residues S548 to P589. A run of 3 repeats spans residues K568–A574, K575–A581, and K582–K588. Residues K568–K588 form a 3 X 7 AA tandem repeats of K-A-S-P-Q-A-[AK] region. Residues V616 to T629 show a composition bias toward pro residues. Residues Q668 to L677 show a composition bias toward polar residues. Residues S678–S692 show a composition bias toward low complexity. Positions E693–V702 are enriched in polar residues. Composition is skewed to acidic residues over residues F769 to S784 and S847 to T858. An Omega-N-methylarginine modification is found at R863. Residue S965 is modified to Phosphoserine. Low complexity predominate over residues P979–S996. Residues I1032–T1087 adopt a coiled-coil conformation. Residues D1034 to L1047 are compositionally biased toward acidic residues. Residues S1035 and S1036 each carry the phosphoserine modification. Residues L1048–R1061 show a composition bias toward basic and acidic residues. S1085 carries the post-translational modification Phosphoserine. T1087 is subject to Phosphothreonine. A phosphoserine mark is found at S1093 and S1099. Residues E1102–S1117 show a composition bias toward basic and acidic residues. Low complexity-rich tracts occupy residues C1118–D1128 and S1158–P1175. Residues L1176 to A1203 adopt a coiled-coil conformation. Over residues K1177 to L1192 the composition is skewed to basic and acidic residues. Over residues Q1194–R1204 the composition is skewed to low complexity. Polar residues predominate over residues S1211–Y1224. S1221 carries the post-translational modification Phosphoserine. Positions S1318–S1328 are enriched in low complexity. T1339 carries O-linked (GlcNAc) threonine glycosylation. Positions F1342–K1351 are enriched in basic and acidic residues. Low complexity-rich tracts occupy residues L1352 to K1364 and P1374 to P1386. An O-linked (GlcNAc) threonine glycan is attached at T1380. Residues S1402 to E1426 show a composition bias toward polar residues. S1470, S1479, and S1481 each carry phosphoserine. Residues S1476–S1487 show a composition bias toward low complexity. Composition is skewed to polar residues over residues E1496–I1510 and R1561–P1597. Omega-N-methylarginine is present on residues R1780 and R1784. R1794 carries the asymmetric dimethylarginine; alternate modification. R1794 is modified (omega-N-methylarginine; alternate). Omega-N-methylarginine is present on R1806. A disordered region spans residues P1914 to P1964. O-linked (GlcNAc) threonine glycosylation is present at T1922. A phosphoserine mark is found at S1978 and S2034. R2039 and R2069 each carry omega-N-methylarginine. An asymmetric dimethylarginine mark is found at R2243, R2253, and R2259. Residues A2280–S2305 form a disordered region. Residue T2307 is glycosylated (O-linked (GlcNAc) threonine). 2 disordered regions span residues V2318 to L2343 and E2461 to A2486. Residues R2345–P2470 are a coiled coil. T2510 carries O-linked (GlcNAc) threonine glycosylation. Residues P2513–A2648 form a disordered region. Over residues S2527–E2537 the composition is skewed to polar residues. S2564 carries the post-translational modification Phosphoserine. A phosphothreonine mark is found at T2581 and T2608. Over residues R2629–A2641 the composition is skewed to basic and acidic residues. An O-linked (GlcNAc) threonine glycan is attached at T2685. An interaction with DAO region spans residues E2715–D3263. Phosphoserine is present on residues S2796, S2845, and S2851. The segment at T2839–K2859 is disordered. T2930 carries O-linked (GlcNAc) threonine glycosylation. Residues S2933–L2975 adopt a coiled-coil conformation. The sufficient for binding to ERC2 stretch occupies residues L2934–L2996. Position 3007 is a phosphoserine (S3007). The span at T3055–G3068 shows a compositional bias: polar residues. Disordered stretches follow at residues T3055–E3148, A3162–F3399, Q3414–H3546, and Y3569–K3910. Over residues E3184–D3196 the composition is skewed to basic and acidic residues. Polar residues predominate over residues S3198–P3222. S3286 carries the phosphoserine modification. Residues E3304–Y3315 are compositionally biased toward polar residues. 3 stretches are compositionally biased toward basic and acidic residues: residues S3316–K3328, Q3358–E3377, and L3450–A3469. S3368 is modified (phosphoserine). R3488 carries the post-translational modification Omega-N-methylarginine. Residues P3506–G3520 show a composition bias toward low complexity. Basic and acidic residues-rich tracts occupy residues V3535–H3546 and W3578–D3588. The segment covering E3638–R3651 has biased composition (basic residues). Residues H3652 to P3676 are compositionally biased toward basic and acidic residues. Low complexity predominate over residues P3751–T3820. A coiled-coil region spans residues Q3772–A3803. R3822 carries the post-translational modification Omega-N-methylarginine. Residues K3834–A3848 show a composition bias toward pro residues. Low complexity-rich tracts occupy residues K3860 to A3887 and G3894 to G3904.

Interacts with PCLO, ERC2/CAST1, RIMS1 and UNC13A. Interacts with TPRG1L. Interacts with DYNLL1 and DYNLL2; these interactions potentially link PTVs to dynein and myosin V motor complexes. Interacts with ATG5; this interaction is important for the regulation of presynaptic autophagy. Interacts (via C-terminus) with TRIO (via N-terminus). Interacts with CTBP1. Interacts with SIAH1; this interaction negatively regulates SIAH1 E3 ligase activity. Interacts (via coiled region) with DAO; the interaction is direct. Post-translationally, myristoylated. The N-terminal myristoylation is not sufficient for presynaptic localization. Detected at synapses in the stratum lucidum in the hippocampus CA3 region (at protein level).

The protein resides in the cytoplasm. It localises to the presynaptic active zone. Its subcellular location is the cytoskeleton. It is found in the cytoplasmic vesicle. The protein localises to the secretory vesicle. The protein resides in the synaptic vesicle membrane. Functionally, scaffold protein of the presynaptic cytomatrix at the active zone (CAZ) which is the place in the synapse where neurotransmitter is released. After synthesis, participates in the formation of Golgi-derived membranous organelles termed Piccolo-Bassoon transport vesicles (PTVs) that are transported along axons to sites of nascent synaptic contacts. At the presynaptic active zone, regulates the spatial organization of synaptic vesicle cluster, the protein complexes that execute membrane fusion and compensatory endocytosis. Also functions in processes other than assembly such as the regulation of specific presynaptic protein ubiquitination by interacting with SIAH1 or the regulation of presynaptic autophagy by associating with ATG5. Also mediates synapse to nucleus communication leading to reconfiguration of gene expression by associating with the transcriptional corepressor CTBP1 and by subsequently reducing the size of its pool available for nuclear import. Inhibits the activity of the proportion of DAO enzyme that localizes to the presynaptic active zone, which may modulate synaptic transmission. The protein is Protein bassoon of Rattus norvegicus (Rat).